We begin with the raw amino-acid sequence, 450 residues long: Probable glycine dehydrogenase (decarboxylating) subunit 1 (450 aa).

Belongs to the GcvP family. N-terminal subunit subfamily. The glycine cleavage system is composed of four proteins: P, T, L and H. In this organism, the P 'protein' is a heterodimer of two subunits.

The catalysed reaction is N(6)-[(R)-lipoyl]-L-lysyl-[glycine-cleavage complex H protein] + glycine + H(+) = N(6)-[(R)-S(8)-aminomethyldihydrolipoyl]-L-lysyl-[glycine-cleavage complex H protein] + CO2. Its function is as follows. The glycine cleavage system catalyzes the degradation of glycine. The P protein binds the alpha-amino group of glycine through its pyridoxal phosphate cofactor; CO(2) is released and the remaining methylamine moiety is then transferred to the lipoamide cofactor of the H protein. This Desulfotalea psychrophila (strain LSv54 / DSM 12343) protein is Probable glycine dehydrogenase (decarboxylating) subunit 1.